Reading from the N-terminus, the 344-residue chain is MTTVLGIETSCDETGVGIARLDPDGTVTLLADEVASSVDEHVRFGGVVPEIASRAHLEALGPAMRRALAAAGLKQPDIVAATIGPGLAGALLVGVAAAKAYSAAWGVPFYAVNHLGGHLAADVYEHGPLPECVALLVSGGHTHLLHVRSLGEPIIELGSTVDDAAGEAYDKVARLLGLGYPGGKALDDLARTGDRDAIVFPRGMSGPADDRYAFSFSGLKTAVARYVESHAADPGFRTADIAAGFQEAVADVLTMKAVRAATALGVSTLLIAGGVAANSRLRELATQRCGEAGRTLRIPSPRLCTDNGAMIAAFAAQLVAAGAPPSPLDVPSDPGLPVMQGQVR.

His-114 and His-118 together coordinate Fe cation. Residues 136 to 140 (LVSGG), Asp-170, Gly-183, Asp-187, and Asn-278 contribute to the substrate site. Asp-306 is a binding site for Fe cation. A disordered region spans residues 325–344 (PSPLDVPSDPGLPVMQGQVR).

It belongs to the KAE1 / TsaD family. The cofactor is Fe(2+).

The protein resides in the cytoplasm. The enzyme catalyses L-threonylcarbamoyladenylate + adenosine(37) in tRNA = N(6)-L-threonylcarbamoyladenosine(37) in tRNA + AMP + H(+). Its function is as follows. Required for the formation of a threonylcarbamoyl group on adenosine at position 37 (t(6)A37) in tRNAs that read codons beginning with adenine. Is involved in the transfer of the threonylcarbamoyl moiety of threonylcarbamoyl-AMP (TC-AMP) to the N6 group of A37, together with TsaE and TsaB. TsaD likely plays a direct catalytic role in this reaction. The polypeptide is tRNA N6-adenosine threonylcarbamoyltransferase (Mycobacterium tuberculosis (strain ATCC 25177 / H37Ra)).